The sequence spans 339 residues: Protein-glutamate methylesterase/protein-glutamine glutaminase 3 (339 aa).

The region spanning 2–119 (NIGIVNDLPL…GLSTDASPQA (118 aa)) is the Response regulatory domain. At Asp-53 the chain carries 4-aspartylphosphate. The region spanning 141–336 (PGPAPTRGQP…PQLIARIALT (196 aa)) is the CheB-type methylesterase domain. Residues Ser-158, His-185, and Asp-278 contribute to the active site.

The protein belongs to the CheB family. Post-translationally, phosphorylated by CheA. Phosphorylation of the N-terminal regulatory domain activates the methylesterase activity.

The protein resides in the cytoplasm. The catalysed reaction is [protein]-L-glutamate 5-O-methyl ester + H2O = L-glutamyl-[protein] + methanol + H(+). It catalyses the reaction L-glutaminyl-[protein] + H2O = L-glutamyl-[protein] + NH4(+). Its function is as follows. Involved in chemotaxis. Part of a chemotaxis signal transduction system that modulates chemotaxis in response to various stimuli. Catalyzes the demethylation of specific methylglutamate residues introduced into the chemoreceptors (methyl-accepting chemotaxis proteins or MCP) by CheR. Also mediates the irreversible deamidation of specific glutamine residues to glutamic acid. The sequence is that of Protein-glutamate methylesterase/protein-glutamine glutaminase 3 from Burkholderia orbicola (strain AU 1054).